The chain runs to 314 residues: Cytochrome c biogenesis protein CcsA (314 aa).

A run of 8 helical transmembrane segments spans residues 15-35 (VSFI…ISLI), 48-68 (LITI…WIIS), 73-93 (ISNL…GQLL), 102-122 (IIPA…CFVL), 148-168 (VMLS…VLFI), 216-236 (SILV…IWAN), 250-267 (TWAF…HMRI), and 277-297 (ALLA…VNFL).

This sequence belongs to the CcmF/CycK/Ccl1/NrfE/CcsA family. As to quaternary structure, may interact with ccs1.

The protein resides in the cellular thylakoid membrane. Required during biogenesis of c-type cytochromes (cytochrome c6 and cytochrome f) at the step of heme attachment. This chain is Cytochrome c biogenesis protein CcsA, found in Prochlorococcus marinus subsp. pastoris (strain CCMP1986 / NIES-2087 / MED4).